Reading from the N-terminus, the 726-residue chain is Prolyl endopeptidase-like (726 aa).

Phosphoserine is present on Ser-138. Residues Ser-558, Asp-644, and His-689 each act as charge relay system in the active site.

The protein belongs to the peptidase S9A family. As to quaternary structure, homodimer. Interacts with the AP-1 complex.

It is found in the cytoplasm. The protein localises to the cytosol. Its subcellular location is the golgi apparatus. It localises to the trans-Golgi network. The protein resides in the cytoskeleton. It is found in the nucleus. Functionally, serine peptidase whose precise substrate specificity remains unclear. Does not cleave peptides after a arginine or lysine residue. Regulates trans-Golgi network morphology and sorting by regulating the membrane binding of the AP-1 complex. May play a role in the regulation of synaptic vesicle exocytosis. The protein is Prolyl endopeptidase-like (Prepl) of Rattus norvegicus (Rat).